Consider the following 611-residue polypeptide: Endo-1,4-beta-xylanase A (611 aa).

The N-terminal stretch at 1 to 26 is a signal peptide; sequence MRTAMAKSLGAAAFLGAALFAHTLAA. In terms of domain architecture, CBM2 spans 27–128; sequence QTATCSYNIT…SVGGSICSGS (102 aa). Disulfide bonds link Cys31-Cys125, Cys184-Cys215, and Cys194-Cys209. The CBM10 domain maps to 183–212; the sequence is QCNWYGTLYPLCVTTTNGWGWEDQRSCIAR. Residues 281-607 enclose the GH10 domain; it reads SGGNADIFTS…KPAYQGVVEA (327 aa). Glu391 functions as the Proton donor in the catalytic mechanism. The active-site Nucleophile is Glu510.

This sequence belongs to the glycosyl hydrolase 10 (cellulase F) family.

The enzyme catalyses Endohydrolysis of (1-&gt;4)-beta-D-xylosidic linkages in xylans.. Its pathway is glycan degradation; xylan degradation. In Cellvibrio japonicus (strain Ueda107) (Pseudomonas fluorescens subsp. cellulosa), this protein is Endo-1,4-beta-xylanase A (xynA).